The sequence spans 401 residues: Nodulation protein E (401 aa).

The Ketosynthase family 3 (KS3) domain occupies 2–400 (DRRVVITGMG…GTNAVLAFKQ (399 aa)). Catalysis depends on for beta-ketoacyl synthase activity residues Cys161, His293, and His330. A helical membrane pass occupies residues 328–347 (HAHCIGAASALEMIACVMAI).

It belongs to the thiolase-like superfamily. Beta-ketoacyl-ACP synthases family.

The protein resides in the cell inner membrane. Proposed to synthesize NOD factor fatty acyl chain. Involved in the synthesis of a highly unsaturated fatty acid moiety, which forms part of a lipo-oligosaccharide that is responsible for host specificity. The chain is Nodulation protein E (nodE) from Rhizobium meliloti (Ensifer meliloti).